The following is a 366-amino-acid chain: 5-hydroxytryptamine receptor 1F (366 aa).

The Extracellular portion of the chain corresponds to 1-24 (MDFLNSSDQNLTSEELLNRMPSKI). Asparagine 5 and asparagine 10 each carry an N-linked (GlcNAc...) asparagine glycan. Residues 25–49 (LVSLTLSGLALMTTTINCLVITAII) traverse the membrane as a helical segment. The Cytoplasmic portion of the chain corresponds to 50–59 (VTRKLHHPAN). A helical membrane pass occupies residues 60-81 (YLICSLAVTDFLVAVLVMPFSI). Residues 82-96 (VYIVRESWIMGQGLC) lie on the Extracellular side of the membrane. An intrachain disulfide couples cysteine 96 to cysteine 172. The helical transmembrane segment at 97–119 (DLWLSVDIICCTCSILHLSAIAL) threads the bilayer. Residues aspartate 103 and cysteine 107 each coordinate serotonin. Positions 120–122 (DRY) match the DRY motif; important for ligand-induced conformation changes motif. Residues 120 to 139 (DRYRAITDAVEYARKRTPRH) lie on the Cytoplasmic side of the membrane. Residues 140-159 (AGITITTVWVISVFISVPPL) form a helical membrane-spanning segment. At 160-178 (FWRHQGNSRDDQCIIKHDH) the chain is on the extracellular side. Residues 179 to 202 (IVSTIYSTFGAFYIPLVLILILYY) traverse the membrane as a helical segment. Over 203 to 291 (KIYRAARTLY…KISGTRERKA (89 aa)) the chain is Cytoplasmic. The chain crosses the membrane as a helical span at residues 292-315 (ATTLGLILGAFVICWLPFFVKELV). The Extracellular portion of the chain corresponds to 316–327 (VNICEKCKISEE). A helical transmembrane segment spans residues 328-350 (MSNFLAWLGYLNSLINPLIYTIF). Residues 343-347 (NPLIY) carry the NPxxY motif; important for ligand-induced conformation changes and signaling motif. Topologically, residues 351–366 (NEDFKKAFQKLVRCRN) are cytoplasmic.

Belongs to the G-protein coupled receptor 1 family.

It localises to the cell membrane. Functionally, G-protein coupled receptor for 5-hydroxytryptamine (serotonin). Also functions as a receptor for various alkaloids and psychoactive substances. Ligand binding causes a conformation change that triggers signaling via guanine nucleotide-binding proteins (G proteins) and modulates the activity of downstream effectors, such as adenylate cyclase. HTR1F is coupled to G(i)/G(o) G alpha proteins and mediates inhibitory neurotransmission by inhibiting adenylate cyclase activity. In Rattus norvegicus (Rat), this protein is 5-hydroxytryptamine receptor 1F (Htr1f).